The chain runs to 1697 residues: Neurexin-3a (1697 aa).

An N-terminal signal peptide occupies residues 1–23; sequence MNFFRFPVQLQLLISTVLGPCLG. Residues 24–198 form the Laminin G-like 1 domain; that stretch reads LEFTGLQGQW…RVRMDIEGIC (175 aa). Residues 24–1622 are Extracellular-facing; the sequence is LEFTGLQGQW…EVVRESSSTT (1599 aa). Positions 194–231 constitute an EGF-like 1 domain; the sequence is IEGICMENPCENGGTCSVVDGEPLCDCSKTEYVGRFCN. 3 disulfide bridges follow: cysteine 198–cysteine 209, cysteine 203–cysteine 218, and cysteine 220–cysteine 230. 2 consecutive Laminin G-like domains span residues 258 to 455 and 462 to 654; these read VATF…VFKC and DPIS…KPSC. Ca(2+) contacts are provided by aspartate 304, leucine 321, and methionine 389. Disulfide bonds link cysteine 419–cysteine 455, cysteine 625–cysteine 654, cysteine 662–cysteine 673, cysteine 667–cysteine 682, and cysteine 684–cysteine 694. The EGF-like 2 domain maps to 658-695; it reads SGKQCDSYPCKNKGLCKEGWNRFICDCTGTGYWSRTCE. Laminin G-like domains follow at residues 700 to 872 and 886 to 1061; these read ILSY…IDFC and DPVT…ERGC. 4 disulfides stabilise this stretch: cysteine 1033–cysteine 1061, cysteine 1077–cysteine 1088, cysteine 1082–cysteine 1097, and cysteine 1099–cysteine 1109. One can recognise an EGF-like 3 domain in the interval 1073–1110; the sequence is PSTTCQEDSCANMGICIQQWENYTCDCSMTSYTGTHCN. Residues 1114–1314 enclose the Laminin G-like 6 domain; the sequence is TTYIFGKGGG…NPNIKINGSV (201 aa). Disordered stretches follow at residues 1345–1366, 1442–1479, and 1520–1557; these read TMSTTTTRKHRTPPTIQTTDDM, LSDGGSDDCGDDDDDDDDDGLMISGYGSGEAYDSNLPP, and PNKVFDSGRTTTASFSPKLSRSTTTSTPPKLPAGKMNH. Over residues 1446–1461 the composition is skewed to acidic residues; sequence GSDDCGDDDDDDDDDG. Positions 1527-1547 are enriched in polar residues; the sequence is GRTTTASFSPKLSRSTTTSTP. The helical transmembrane segment at 1623–1643 threads the bilayer; it reads GMVVGIVAAAALCILILLYAM. Residues 1644–1697 are Cytoplasmic-facing; the sequence is YKYRNRDEGSYQVDETRNYITNSAQSNGAVMKDKQQSTKSGNKKQKNKDKEYYV. Residues 1665–1697 form a disordered region; it reads NSAQSNGAVMKDKQQSTKSGNKKQKNKDKEYYV.

Belongs to the neurexin family.

Its subcellular location is the membrane. Its function is as follows. Neuronal cell surface protein that may be involved in cell recognition and cell adhesion. The protein is Neurexin-3a (nrxn3a) of Danio rerio (Zebrafish).